The sequence spans 288 residues: Alpha-acetolactate decarboxylase (288 aa).

A signal peptide spans 1 to 23 (MNIKYFLIFLILLAVTSFTLFSG).

Belongs to the alpha-acetolactate decarboxylase family.

It catalyses the reaction (2S)-2-acetolactate + H(+) = (R)-acetoin + CO2. The protein operates within polyol metabolism; (R,R)-butane-2,3-diol biosynthesis; (R,R)-butane-2,3-diol from pyruvate: step 2/3. Its function is as follows. Converts acetolactate into acetoin. The sequence is that of Alpha-acetolactate decarboxylase from Methanosarcina mazei (strain ATCC BAA-159 / DSM 3647 / Goe1 / Go1 / JCM 11833 / OCM 88) (Methanosarcina frisia).